A 468-amino-acid chain; its full sequence is Aldehyde dehydrogenase family 3 member B1 (468 aa).

An N-acetylmethionine modification is found at M1. Residue 188–193 (GNAYVG) participates in NAD(+) binding. Catalysis depends on residues E210 and C244. Residues C462 and C463 are each lipidated (S-palmitoyl cysteine). C465 carries the cysteine methyl ester modification. Residue C465 is the site of S-geranylgeranyl cysteine attachment. Positions 466–468 (TLL) are cleaved as a propeptide — removed in mature form.

It belongs to the aldehyde dehydrogenase family. In terms of processing, dually lipidated in the C-terminus; prenylation occurs prior to, and is a prerequisite for palmitoylation. It is also required for activity towards long-chain substrates. As to expression, highly expressed in kidney and liver. In brain is expressed at moderate levels in cortex, striatum and hippocampus, and at lower levels in brainstem and cerebellum.

The protein localises to the cell membrane. It catalyses the reaction an aldehyde + NAD(+) + H2O = a carboxylate + NADH + 2 H(+). It carries out the reaction a long-chain fatty aldehyde + NAD(+) + H2O = a long-chain fatty acid + NADH + 2 H(+). The catalysed reaction is a medium-chain fatty aldehyde + NAD(+) + H2O = a medium-chain fatty acid + NADH + 2 H(+). The enzyme catalyses octanal + NAD(+) + H2O = octanoate + NADH + 2 H(+). It catalyses the reaction nonanal + NAD(+) + H2O = nonanoate + NADH + 2 H(+). It carries out the reaction hexadecanoate + NADH + 2 H(+) = hexadecanal + NAD(+) + H2O. The catalysed reaction is (2E)-octenal + NAD(+) + H2O = (2E)-octenoate + NADH + 2 H(+). The enzyme catalyses (E)-non-2-enal + NAD(+) + H2O = (E)-non-2-enoate + NADH + 2 H(+). It catalyses the reaction (E)-4-hydroxynon-2-enal + NAD(+) + H2O = (E)-4-hydroxynon-2-enoate + NADH + 2 H(+). It carries out the reaction (2E)-hexadecenal + NAD(+) + H2O = (E)-hexadec-2-enoate + NADH + 2 H(+). The catalysed reaction is benzaldehyde + NAD(+) + H2O = benzoate + NADH + 2 H(+). The enzyme catalyses an aldehyde + NADP(+) + H2O = a carboxylate + NADPH + 2 H(+). It catalyses the reaction a medium-chain fatty aldehyde + NADP(+) + H2O = a medium-chain fatty acid + NADPH + 2 H(+). It carries out the reaction hexanal + NADP(+) + H2O = hexanoate + NADPH + 2 H(+). The catalysed reaction is octanal + NADP(+) + H2O = octanoate + NADPH + 2 H(+). The enzyme catalyses nonanal + NADP(+) + H2O = nonanoate + NADPH + 2 H(+). It catalyses the reaction (2E)-octenal + NADP(+) + H2O = (2E)-octenoate + NADPH + 2 H(+). It carries out the reaction (E)-non-2-enal + NADP(+) + H2O = (E)-non-2-enoate + NADPH + 2 H(+). The catalysed reaction is (E)-4-hydroxynon-2-enal + NADP(+) + H2O = (E)-4-hydroxynon-2-enoate + NADPH + 2 H(+). The enzyme catalyses benzaldehyde + NADP(+) + H2O = benzoate + NADPH + 2 H(+). It functions in the pathway alcohol metabolism; ethanol degradation; acetate from ethanol: step 2/2. Its function is as follows. Oxidizes medium and long chain saturated and unsaturated fatty aldehydes generated in the plasma membrane into non-toxic fatty acids. May have a protective role against the cytotoxicity induced by lipid peroxidation. Short-chain fatty aldehydes are not good substrates. Can use both NADP(+) and NAD(+) as electron acceptor in vitro, however in vivo preference will depend on their tissue levels. Low activity towards acetaldehyde and 3,4-dihydroxyphenylacetaldehyde. Able to metabolize aromatic aldehydes such as benzaldehyde to their acid form. The protein is Aldehyde dehydrogenase family 3 member B1 (Aldh3b1) of Mus musculus (Mouse).